A 188-amino-acid chain; its full sequence is Probable DNA-directed RNA polymerase subunit delta (188 aa).

Residues 14 to 81 (LSMIEVAHAL…GNNVWALRSW (68 aa)) enclose the HTH HARE-type domain. The interval 96 to 188 (EIEDEEEEEK…EDDSDDTDED (93 aa)) is disordered. Composition is skewed to acidic residues over residues 118–150 (IEDEIDPEDEEGTKETTEEDMSYDTQAEDEDKD) and 158–188 (ELAEVELDNVDEEVDIEVEDDEDDSDDTDED).

Belongs to the RpoE family. As to quaternary structure, RNAP is composed of a core of 2 alpha, a beta and a beta' subunits. The core is associated with a delta subunit and one of several sigma factors.

Participates in both the initiation and recycling phases of transcription. In the presence of the delta subunit, RNAP displays an increased specificity of transcription, a decreased affinity for nucleic acids, and an increased efficiency of RNA synthesis because of enhanced recycling. This chain is Probable DNA-directed RNA polymerase subunit delta, found in Lactococcus lactis subsp. cremoris (strain MG1363).